A 371-amino-acid polypeptide reads, in one-letter code: MSNQHALLISNLLPVGSNISTWWNFGSMLLTCLMLQVLTGFFLAIHYTANINLAFSSVVHITRDVPCGWIMQNTHAIGASLFFICIYIHIARGLYYGLYLNKNVWLSGVTLLMTLMATAFFGYVLPWGQMSFWAATVITNLLTAIPYLGVAVTTWLWGGFSINDPTLTRFFALHFILPFIIISLSSIHIILLHNEGSNNPLGTNSDIDKIPFHPYHSYKDLMTTTSMIILLFIILSFSPDLLNDPENFSKANPLVTPQHIKPEWYFLFAYGILRSIPNKLGGTLALLMSILILTLPPFTHTFYIRPMTFRPLSQTLFWTLIATFVMITWTATKPVEPPFITISQLTSIFYFSFFIMNPLLSWTENKIMMQT.

4 helical membrane-spanning segments follow: residues 25–45, 69–90, 105–125, and 170–190; these read FGSM…FLAI, WIMQ…YIHI, WLSG…GYVL, and FFAL…IHII. Residues His-75 and His-89 each coordinate heme b. Heme b-binding residues include His-174 and His-188. His-193 contributes to the a ubiquinone binding site. 4 helical membrane-spanning segments follow: residues 218–238, 280–300, 312–332, and 339–358; these read YKDL…LSFS, LGGT…PFTH, LSQT…WTAT, and FITI…IMNP.

The protein belongs to the cytochrome b family. In terms of assembly, the cytochrome bc1 complex contains 3 respiratory subunits (MT-CYB, CYC1 and UQCRFS1), 2 core proteins (UQCRC1 and UQCRC2) and probably 6 low-molecular weight proteins. Heme b serves as cofactor.

It localises to the mitochondrion inner membrane. Its function is as follows. Component of the ubiquinol-cytochrome c reductase complex (complex III or cytochrome b-c1 complex) that is part of the mitochondrial respiratory chain. The b-c1 complex mediates electron transfer from ubiquinol to cytochrome c. Contributes to the generation of a proton gradient across the mitochondrial membrane that is then used for ATP synthesis. The polypeptide is Cytochrome b (MT-CYB) (Micrurus fulvius (Eastern coral snake)).